Reading from the N-terminus, the 354-residue chain is Homeobox protein Nkx-2.4 (354 aa).

Positions 189–248 (RRKRRVLFSQAQVYELERRFKQQKYLSAPEREHLASMIHLTPTQVKIWFQNHRYKMKRQA) form a DNA-binding region, homeobox. The disordered stretch occupies residues 246–329 (RQAKDKAAQQ…PALHGPGGGL (84 aa)). The span at 263 to 272 (GPPPPPPPSP) shows a compositional bias: pro residues.

This sequence belongs to the NK-2 homeobox family.

It localises to the nucleus. In terms of biological role, probable transcription factor. The polypeptide is Homeobox protein Nkx-2.4 (NKX2-4) (Homo sapiens (Human)).